Consider the following 489-residue polypeptide: Serine/threonine-protein kinase BSK2 (489 aa).

Positions 1–30 are disordered; the sequence is MGCLHSKTANLPSSDDPSAPNKPESVNGDQ. Glycine 2 carries N-myristoyl glycine lipidation. The segment covering 7-16 has biased composition (polar residues); sequence KTANLPSSDD. The Protein kinase domain occupies 56–322; sequence SCIVSEGGEK…QEEVASHVLM (267 aa). Residues 62–70 and lysine 84 each bind ATP; that span reads GGEKAPNVV. Catalysis depends on aspartate 178, which acts as the Proton acceptor.

The protein belongs to the protein kinase superfamily. Ser/Thr protein kinase family. Phosphorylated by BRI1 upon brassinolide (BL) treatment.

It is found in the cell membrane. The enzyme catalyses L-seryl-[protein] + ATP = O-phospho-L-seryl-[protein] + ADP + H(+). The catalysed reaction is L-threonyl-[protein] + ATP = O-phospho-L-threonyl-[protein] + ADP + H(+). Functionally, probable serine/threonine kinase that acts as a positive regulator of brassinosteroid (BR) signaling downstream of the receptor kinase BRI1. Mediates signal transduction from BRI1 by functioning as substrate of BRI1. In Arabidopsis thaliana (Mouse-ear cress), this protein is Serine/threonine-protein kinase BSK2.